The primary structure comprises 278 residues: 4-deoxy-L-threo-5-hexosulose-uronate ketol-isomerase (278 aa).

Residues His196, His198, Glu203, and His245 each contribute to the Zn(2+) site.

The protein belongs to the KduI family. Zn(2+) serves as cofactor.

The enzyme catalyses 5-dehydro-4-deoxy-D-glucuronate = 3-deoxy-D-glycero-2,5-hexodiulosonate. The protein operates within glycan metabolism; pectin degradation; 2-dehydro-3-deoxy-D-gluconate from pectin: step 4/5. In terms of biological role, catalyzes the isomerization of 5-dehydro-4-deoxy-D-glucuronate to 3-deoxy-D-glycero-2,5-hexodiulosonate. In Salmonella choleraesuis (strain SC-B67), this protein is 4-deoxy-L-threo-5-hexosulose-uronate ketol-isomerase.